The following is a 289-amino-acid chain: Energy-coupling factor transporter ATP-binding protein EcfA2 (289 aa).

The 244-residue stretch at 3–246 folds into the ABC transporter domain; the sequence is IEIKDVEHRY…KDDIAALGLD (244 aa). 40–47 lines the ATP pocket; that stretch reads GHTGSGKS.

The protein belongs to the ABC transporter superfamily. Energy-coupling factor EcfA family. In terms of assembly, forms a stable energy-coupling factor (ECF) transporter complex composed of 2 membrane-embedded substrate-binding proteins (S component), 2 ATP-binding proteins (A component) and 2 transmembrane proteins (T component).

It is found in the cell membrane. Functionally, ATP-binding (A) component of a common energy-coupling factor (ECF) ABC-transporter complex. Unlike classic ABC transporters this ECF transporter provides the energy necessary to transport a number of different substrates. This is Energy-coupling factor transporter ATP-binding protein EcfA2 from Bacillus licheniformis (strain ATCC 14580 / DSM 13 / JCM 2505 / CCUG 7422 / NBRC 12200 / NCIMB 9375 / NCTC 10341 / NRRL NRS-1264 / Gibson 46).